A 937-amino-acid polypeptide reads, in one-letter code: uncharacterized protein (937 aa).

The residue at position 2 (threonine 2) is an N-acetylthreonine. The segment at 281-937 (NESPSSNINT…KKGKGKGGRK (657 aa)) is disordered. The span at 290–308 (TTTTSTTTTTTTTTSSPVV) shows a compositional bias: low complexity. The active-site Charge relay system is the threonine 292. Composition is skewed to basic and acidic residues over residues 309 to 402 (EESK…EKQQ), 411 to 431 (AEKERLEKEEADKLEKERLEA), 469 to 489 (AEKERLEKEEADRLEKEKLEA), 512 to 532 (AEKERLEKEETERLEKEKLEA), 600 to 615 (AEKEEAERLEKEKLEA), 667 to 687 (AEKERLEKEEAERLEKEKLEA), 738 to 758 (AEKERLEKEETERLEKERLEA), and 780 to 872 (AEKE…KVEE). Positions 345 to 802 (VDDSKEKEEK…KAAEETKVEE (458 aa)) form a coiled coil. Positions 887–897 (EETEEGEEVDE) are enriched in acidic residues. Low complexity predominate over residues 898 to 924 (ASNTTTEQTTTNANQPKKPNNNNNNNK). Over residues 925-937 (GKGKKGKGKGGRK) the composition is skewed to basic residues.

It belongs to the AB hydrolase superfamily.

This is an uncharacterized protein from Dictyostelium discoideum (Social amoeba).